We begin with the raw amino-acid sequence, 441 residues long: MAVVPASLSGQDVGSFAYLTIKDRIPQILTKVIDTLHRHKSEFFENHGEEGVEAEKKAISLLSKLRNELQTDKPIIPLVEKFVDTDIWNQYLEYQQSLLNESDGKSRWFYSPWLFVECYMYRRIHEAIIQSPPIDYFDVFKESKEQNFYESQESVIALCTHLQQLIKTIEDLDENQLKDEFFKLLQISLWGNKCDLSLSGGESSSQKTDVLNSLEDLKPFILLNDMEHLWSLLSNCKKTREKASVTRVYIVLDNSGFELVTDLILANFLLSSELATEVHFYGKTIPWFVSDTTIHDFNWLIEQVKHGNHKWMSKCGADWEEYVKMGKWVYHDHIFWTLPHEYCAMPQVAPDLYAELQKAHLILFKGDLNYRKLTGDRKWEFSVPFHQALNGFHPAPLCTIRTLKAEIQVGLKPGQGEQLMASEPCWWTSGKYGIFQYDGPL.

Ala-2 carries the post-translational modification N-acetylalanine. The residue at position 40 (Lys-40) is an N6-acetyllysine. Ser-102 carries the post-translational modification Phosphoserine. Residues Asp-253 and Asn-254 each contribute to the Mn(2+) site. Residue 253–254 coordinates substrate; it reads DN. S-adenosyl-L-methionine-binding residues include Glu-258 and Asp-291. Asp-291 contributes to the Mn(2+) binding site. Residues 367–371 and Lys-404 contribute to the substrate site; that span reads DLNYR. The short motif at 401-404 is the Subfamily III RTxK motif element; the sequence is RTLK.

The protein belongs to the damage-control phosphatase family. Sugar phosphate phosphatase III subfamily. The cofactor is Mn(2+). It depends on Ni(2+) as a cofactor. In terms of processing, automethylated.

The catalysed reaction is beta-D-fructose 1-phosphate + H2O = D-fructose + phosphate. It catalyses the reaction beta-D-fructose 6-phosphate = dihydroxyacetone + D-glyceraldehyde 3-phosphate. It carries out the reaction L-glutamyl-[protein] + S-adenosyl-L-methionine = [protein]-L-glutamate 5-O-methyl ester + S-adenosyl-L-homocysteine. Functionally, metal-dependent phosphatase that shows phosphatase activity against several substrates, including fructose-1-phosphate and fructose-6-phosphate. Its preference for fructose-1-phosphate, a strong glycating agent that causes DNA damage rather than a canonical yeast metabolite, suggests a damage-control function in hexose phosphate metabolism. Has also been shown to have O-methyltransferase activity that methylates glutamate residues of target proteins to form gamma-glutamyl methyl ester residues. Possibly methylates PCNA, suggesting it is involved in the DNA damage response. The sequence is that of Damage-control phosphatase ARMT1 from Macaca fascicularis (Crab-eating macaque).